The following is a 100-amino-acid chain: A-type ATP synthase subunit F (100 aa).

This sequence belongs to the V-ATPase F subunit family. As to quaternary structure, has multiple subunits with at least A(3), B(3), C, D, E, F, H, I and proteolipid K(x).

It is found in the cell membrane. In terms of biological role, component of the A-type ATP synthase that produces ATP from ADP in the presence of a proton gradient across the membrane. This is A-type ATP synthase subunit F from Methanospirillum hungatei JF-1 (strain ATCC 27890 / DSM 864 / NBRC 100397 / JF-1).